The following is a 263-amino-acid chain: Aquaporin Lacbi1:233199 (263 aa).

Residues 1–17 lie on the Cytoplasmic side of the membrane; it reads MFTLAHHRHAIRKPMAE. Residues 18-38 traverse the membrane as a helical segment; that stretch reads FFGVALLVIFGAGAACQVVLS. Over 39–44 the chain is Extracellular; the sequence is TNPNSF. A helical transmembrane segment spans residues 45–65; that stretch reads LSINFGWAIGIAMGAWISGSI. Residues 66 to 88 are Cytoplasmic-facing; the sequence is SGGHINPAITIAMATYRGFPWRE. Residues 71-73 carry the NPA 1 motif; the sequence is NPA. The chain crosses the membrane as a helical span at residues 89-109; it reads VPSYILAQVLGGVVGAALVYA. Residues 110–143 are Extracellular-facing; sequence NYIHAIDVFEGGRHIRTQATASLFATYALPYMTQ. Residues 144 to 164 traverse the membrane as a helical segment; the sequence is VSCFFSEFLATAVLAMMVLAL. Over 165–174 the chain is Cytoplasmic; sequence TDNRNGAPTN. The helical transmembrane segment at 175–195 threads the bilayer; the sequence is GLSPFALFVLFIGLGASLGME. At 196–227 the chain is on the extracellular side; the sequence is TAYALNPARDFGPRLFLAMAGYGKALFNYRSQ. Residues 201 to 203 carry the NPA 2 motif; it reads NPA. The helical transmembrane segment at 228–248 threads the bilayer; it reads YWLWAPIIAPVLGAQAGGLLY. Residues 249 to 263 lie on the Cytoplasmic side of the membrane; sequence DTFLYDGDDSPIKWR.

Belongs to the MIP/aquaporin (TC 1.A.8) family.

Its subcellular location is the membrane. It carries out the reaction H2O(in) = H2O(out). Functionally, probable water channel required to facilitate the transport of water across membranes. The polypeptide is Aquaporin Lacbi1:233199 (Laccaria bicolor (strain S238N-H82 / ATCC MYA-4686) (Bicoloured deceiver)).